Here is a 299-residue protein sequence, read N- to C-terminus: Probable lipid kinase YegS (299 aa).

The DAGKc domain maps to 2-133 (ADLPASLLIL…IDIAQVNKET (132 aa)). ATP contacts are provided by residues T40, 66-72 (GDGTINE), and T95. 3 residues coordinate Mg(2+): L215, D218, and L220. The Proton acceptor role is filled by E271.

The protein belongs to the diacylglycerol/lipid kinase family. YegS lipid kinase subfamily. The cofactor is Mg(2+). It depends on Ca(2+) as a cofactor.

Its subcellular location is the cytoplasm. In terms of biological role, probably phosphorylates lipids; the in vivo substrate is unknown. The protein is Probable lipid kinase YegS of Escherichia fergusonii (strain ATCC 35469 / DSM 13698 / CCUG 18766 / IAM 14443 / JCM 21226 / LMG 7866 / NBRC 102419 / NCTC 12128 / CDC 0568-73).